We begin with the raw amino-acid sequence, 391 residues long: cAMP-dependent protein kinase regulatory subunit (391 aa).

Residues 1–84 (MFKSPFGANA…PPNPESYPAQ (84 aa)) form a disordered region. The tract at residues 1-131 (MFKSPFGANA…RLKTAIAGNF (131 aa)) is dimerization and phosphorylation. The span at 38–55 (TVTSPTSPNFGMNAQSMF) shows a compositional bias: polar residues. Phosphoserine is present on S92. 3',5'-cyclic AMP-binding positions include 132 to 261 (LFSH…FLRE), E210, R219, 264 to 381 (LLQT…DIKT), E331, and R340.

It belongs to the cAMP-dependent kinase regulatory chain family. As to quaternary structure, tetramer, composed of 2 regulatory (R) and 2 catalytic (C) subunits. In the presence of cAMP it dissociates into 2 active monomeric C subunits and an R dimer.

The chain is cAMP-dependent protein kinase regulatory subunit (PKAR) from Colletotrichum orbiculare (strain 104-T / ATCC 96160 / CBS 514.97 / LARS 414 / MAFF 240422) (Cucumber anthracnose fungus).